Here is a 366-residue protein sequence, read N- to C-terminus: D-alanine--D-alanine ligase (366 aa).

The 207-residue stretch at K146 to E352 folds into the ATP-grasp domain. E179–E234 contributes to the ATP binding site. Residues D305, E319, and N321 each coordinate Mg(2+).

Belongs to the D-alanine--D-alanine ligase family. It depends on Mg(2+) as a cofactor. Requires Mn(2+) as cofactor.

The protein resides in the cytoplasm. It catalyses the reaction 2 D-alanine + ATP = D-alanyl-D-alanine + ADP + phosphate + H(+). The protein operates within cell wall biogenesis; peptidoglycan biosynthesis. In terms of biological role, cell wall formation. This is D-alanine--D-alanine ligase from Chloroherpeton thalassium (strain ATCC 35110 / GB-78).